The following is a 221-amino-acid chain: Thymidylate kinase (221 aa).

Residue 12 to 19 (GIDGAGKS) participates in ATP binding.

The protein belongs to the thymidylate kinase family.

The enzyme catalyses dTMP + ATP = dTDP + ADP. In terms of biological role, phosphorylation of dTMP to form dTDP in both de novo and salvage pathways of dTTP synthesis. The chain is Thymidylate kinase from Paracidovorax citrulli (strain AAC00-1) (Acidovorax citrulli).